The following is a 268-amino-acid chain: Proenkephalin-A (268 aa).

Residues 1–24 (MARLLRLCTWLVALGPGLLATVQA) form the signal peptide. Intrachain disulfides connect C26-C48, C30-C52, and C33-C65. Residues 163–184 (TGDDRDRENHHQEGGDSDEGVS) are disordered. A compositionally biased stretch (basic and acidic residues) spans 164–176 (GDDRDRENHHQEG). Propeptides lie at residues 197-208 (SPQVEDEAKELQ) and 218-228 (VGRPEWWMDYQ). Phosphoserine is present on S252.

It belongs to the opioid neuropeptide precursor family. In terms of processing, proenkephalin-A is cleaved by CTSL to generate Met-enkephalin. Post-translationally, processed and degraded by ACE. Probably cleaved by ACE. In terms of processing, processed by ACE to generate Met-enkephalin in the nucleus accumbens of the brain. Post-translationally, the N-terminal domain contains 6 conserved cysteines thought to be involved in disulfide bonding and/or processing.

It localises to the cytoplasmic vesicle. It is found in the secretory vesicle. The protein localises to the chromaffin granule lumen. The protein resides in the secreted. Its function is as follows. Neuropeptide that competes with and mimic the effects of opiate drugs. They play a role in a number of physiologic functions, including pain perception and responses to stress. Functionally, met-enkephalin-Arg-Phe neuropeptide acts as a strong ligand of Mu-type opioid receptor OPRM1. Met-enkephalin-Arg-Phe-binding to OPRM1 in the nucleus accumbens of the brain increases activation of OPRM1, leading to long-term synaptic depression of glutamate release. In terms of biological role, increases glutamate release in the striatum and decreases GABA concentration in the striatum. Increases glutamate release in the striatum. The sequence is that of Proenkephalin-A (PENK) from Cavia porcellus (Guinea pig).